A 446-amino-acid polypeptide reads, in one-letter code: ATP synthase subunit b-delta (446 aa).

The interval 1–168 (MSTFIGQLFG…PATADVDYPL (168 aa)) is ATP synthase subunit b. Residues 4 to 24 (FIGQLFGFAVIVYLVWRFIVP) traverse the membrane as a helical segment. The ATP synthase subunit delta stretch occupies residues 169 to 446 (LAKMRSASRR…LAAAEARLPD (278 aa)).

This sequence in the N-terminal section; belongs to the ATPase B chain family. The protein in the C-terminal section; belongs to the ATPase delta chain family. In terms of assembly, F-type ATPases have 2 components, F(1) - the catalytic core - and F(0) - the membrane proton channel. F(1) has five subunits: alpha(3), beta(3), gamma(1), delta(1), epsilon(1). F(0) has three main subunits: a(1), b(2) and c(10-14). The alpha and beta chains form an alternating ring which encloses part of the gamma chain. F(1) is attached to F(0) by a central stalk formed by the gamma and epsilon chains, while a peripheral stalk is formed by the delta and b chains.

It is found in the cell membrane. F(1)F(0) ATP synthase produces ATP from ADP in the presence of a proton or sodium gradient. F-type ATPases consist of two structural domains, F(1) containing the extramembraneous catalytic core and F(0) containing the membrane proton channel, linked together by a central stalk and a peripheral stalk. During catalysis, ATP synthesis in the catalytic domain of F(1) is coupled via a rotary mechanism of the central stalk subunits to proton translocation. In terms of biological role, this fusion protein includes a component of the F(0) channel (subunit b) and of the F(1) subunit (subunit delta). Two copies of subunit b and one of delta together form the peripheral 'stator' stalk which links F(1) to F(0). The sequence is that of ATP synthase subunit b-delta (atpFH) from Mycobacterium tuberculosis (strain CDC 1551 / Oshkosh).